The primary structure comprises 563 residues: Probable trehalase (563 aa).

Substrate is bound by residues arginine 154, 161-162, asparagine 198, 207-209, 274-276, and glycine 307; these read WD, RSQ, and RPE. Residues aspartate 309 and glutamate 517 each act as proton donor/acceptor in the active site. Position 532 (glutamate 532) interacts with substrate.

Belongs to the glycosyl hydrolase 37 family.

The enzyme catalyses alpha,alpha-trehalose + H2O = alpha-D-glucose + beta-D-glucose. Involved in the regulation of trehalose content by hydrolyzing trehalose to glucose. This Oryza sativa subsp. japonica (Rice) protein is Probable trehalase.